Here is an 85-residue protein sequence, read N- to C-terminus: Arminin 524 (85 aa).

The N-terminal stretch at 1–18 (MKAVFAILFLAFIALTYA) is a signal peptide. Positions 19–57 (KSYDEVKEEIKNEVEREIFEDLEEESDELDNDVEEFNDA) are excised as a propeptide. An Alanine amide modification is found at Ala82.

The protein belongs to the arminin family. In terms of tissue distribution, expressed in entodermal epithelium along the body column.

The protein resides in the secreted. It localises to the target cell membrane. Its function is as follows. Antimicrobial peptide with a broad-spectrum antimicrobial activity. Keeps its antibacterial activity under a wide range of salt concentrations that mimic physiological conditions of human blood, which is surprising, since Hydra is an obligate freshwater animal with nearly no salt tolerance. Does not affect red blood cells. The polypeptide is Arminin 524 (Hydra oligactis (Brown hydra)).